Here is a 480-residue protein sequence, read N- to C-terminus: Protein U54 (480 aa).

The chain is Protein U54 from Elephas maximus (Indian elephant).